Reading from the N-terminus, the 165-residue chain is V-type proton ATPase 16 kDa proteolipid subunit (165 aa).

Over 1 to 10 (MSSVFSGDET) the chain is Lumenal. The chain crosses the membrane as a helical span at residues 11–33 (APFFGFLGAASALIFSCMGAAYG). The Cytoplasmic portion of the chain corresponds to 34-55 (TAKSGVGVASMGVMRPELVMKS). The chain crosses the membrane as a helical span at residues 56-76 (IVPVVMAGVLGIYGLIIAVII). Residues 77–95 (STGINPKAKPYYLFDGYAH) lie on the Lumenal side of the membrane. Residues 96–117 (LSSGLACGLAGLAAGMAIGIVG) form a helical membrane-spanning segment. The Cytoplasmic portion of the chain corresponds to 118-129 (DAGVRANAQQPK). A helical membrane pass occupies residues 130 to 155 (LFVGMILILIFAEALALYGLIVGIIL). Residues 156 to 165 (SSRAGQSRAD) are Lumenal-facing.

The protein belongs to the V-ATPase proteolipid subunit family. V-ATPase is a heteromultimeric enzyme composed of a peripheral catalytic V1 complex (main components: subunits A, B, C, D, E, and F) attached to an integral membrane V0 proton pore complex (main component: the proteolipid protein; which is present as a hexamer that forms the proton-conducting pore).

Its subcellular location is the vacuole membrane. Functionally, proton-conducting pore forming subunit of the membrane integral V0 complex of vacuolar ATPase. V-ATPase is responsible for acidifying a variety of intracellular compartments in eukaryotic cells. In Oryza sativa subsp. indica (Rice), this protein is V-type proton ATPase 16 kDa proteolipid subunit (VATP-P1).